The chain runs to 117 residues: G antigen 12H (117 aa).

The tract at residues M1–C117 is disordered. Acidic residues-rich tracts occupy residues F32–E45 and E87–E96. The segment covering E103–C117 has biased composition (basic and acidic residues).

Belongs to the GAGE family.

The protein is G antigen 12H (GAGE12H) of Homo sapiens (Human).